The sequence spans 351 residues: 1-acylglycerol-3-phosphate O-acyltransferase ABHD5 (351 aa).

The region spanning 79–184 (PLVLLHGFGG…LILVEPWGFP (106 aa)) is the AB hydrolase-1 domain. The residue at position 124 (Ser-124) is a Phosphoserine. Positions 329–334 (HYVYAD) match the HXXXXD motif motif.

Belongs to the peptidase S33 family. ABHD4/ABHD5 subfamily. As to quaternary structure, interacts with ADRP. Interacts with PLIN. Interacts with and PNPLA2. Interacts with PLIN5; promotes interaction with PNPLA2. Highly expressed in the adipose tissue and testes. Weakly expressed in the liver, muscle, kidney, and heart. Expressed by upper epidermal layers and dermal fibroblasts in skin, hepatocytes and hypothalamus in brain (at protein level).

The protein localises to the cytoplasm. The protein resides in the lipid droplet. It is found in the cytosol. It catalyses the reaction a 1-acyl-sn-glycero-3-phosphate + an acyl-CoA = a 1,2-diacyl-sn-glycero-3-phosphate + CoA. The enzyme catalyses 1-(9Z-octadecenoyl)-sn-glycero-3-phosphate + (9Z)-octadecenoyl-CoA = 1,2-di-(9Z-octadecenoyl)-sn-glycero-3-phosphate + CoA. The catalysed reaction is 1-(9Z-octadecenoyl)-sn-glycero-3-phosphate + hexadecanoyl-CoA = 1-(9Z)-octadecenoyl-2-hexadecanoyl-sn-glycero-3-phosphate + CoA. It carries out the reaction 1-(9Z-octadecenoyl)-sn-glycero-3-phosphate + octadecanoyl-CoA = 1-(9Z-octadecenoyl)-2-octadecanoyl-sn-glycero-3-phosphate + CoA. It catalyses the reaction 1-(9Z-octadecenoyl)-sn-glycero-3-phosphate + (5Z,8Z,11Z,14Z)-eicosatetraenoyl-CoA = 1-(9Z)-octadecenoyl-2-(5Z,8Z,11Z,14Z)-eicosatetraenoyl-sn-glycero-3-phosphate + CoA. The enzyme catalyses eicosanoyl-CoA + 1-(9Z-octadecenoyl)-sn-glycero-3-phosphate = 1-(9Z)-octadecenoyl-2-eicosanoyl-sn-glycero-3-phosphate + CoA. The catalysed reaction is 1-hexadecanoyl-sn-glycero-3-phosphate + (9Z)-octadecenoyl-CoA = 1-hexadecanoyl-2-(9Z-octadecenoyl)-sn-glycero-3-phosphate + CoA. It carries out the reaction 1-octadecanoyl-sn-glycero-3-phosphate + (9Z)-octadecenoyl-CoA = 1-octadecanoyl-2-(9Z-octadecenoyl)-sn-glycero-3-phosphate + CoA. It catalyses the reaction 1-(5Z,8Z,11Z,14Z-eicosatetraenoyl)-sn-glycero-3-phosphate + (9Z)-octadecenoyl-CoA = 1-(5Z,8Z,11Z,14Z)-eicosatetraenoyl-2-(9Z)-octadecenoyl-sn-glycero-3-phosphate + CoA. Its activity is regulated as follows. Acyltransferase activity is inhibited by detergents such as Triton X-100 and 3-[(3-cholamidopropyl)dimethylammonio]-1-propanesulfonate (CHAPS). Acyltransferase activity is inhibited by the presence of magnesium and calcium. Functionally, coenzyme A-dependent lysophosphatidic acid acyltransferase that catalyzes the transfer of an acyl group on a lysophosphatidic acid. Functions preferentially with 1-oleoyl-lysophosphatidic acid followed by 1-palmitoyl-lysophosphatidic acid, 1-stearoyl-lysophosphatidic acid and 1-arachidonoyl-lysophosphatidic acid as lipid acceptor. Functions preferentially with arachidonoyl-CoA followed by oleoyl-CoA as acyl group donors. Functions in phosphatidic acid biosynthesis. May regulate the cellular storage of triacylglycerol through activation of the phospholipase PNPLA2. Involved in keratinocyte differentiation. Regulates lipid droplet fusion. The polypeptide is 1-acylglycerol-3-phosphate O-acyltransferase ABHD5 (Mus musculus (Mouse)).